Consider the following 193-residue polypeptide: DNA dC-&gt;dU-editing enzyme APOBEC-3H (193 aa).

Residues 24 to 126 (YRRKTYLCYQ…WKYQQGLRHL (103 aa)) form the CMP/dCMP-type deaminase domain. Residue H54 participates in Zn(2+) binding. E56 (proton donor) is an active-site residue. C85 and C88 together coordinate Zn(2+).

Belongs to the cytidine and deoxycytidylate deaminase family. In terms of assembly, homodimer. Requires Zn(2+) as cofactor. As to expression, expressed in peripheral blood mononuclear cells.

It localises to the cytoplasm. The catalysed reaction is a 2'-deoxycytidine in single-stranded DNA + H2O + H(+) = a 2'-deoxyuridine in single-stranded DNA + NH4(+). Its function is as follows. DNA deaminase (cytidine deaminase) which acts as an inhibitor of retrovirus replication and retrotransposon mobility via deaminase-dependent and -independent mechanisms. Selectively targets single-stranded DNA and does not deaminate double-stranded DNA or single- or double-stranded RNA. Exhibits single-stranded DNA deaminase activity (in vitro). Incorporates into the released virions of the virion infectivity factor (vif)-deficient feline immunodeficiency virus (FIV) and suppresses FIV infectivity, probably in a deaminase-dependent manner (in vitro). Induces G-to-A hypermutations in vif-deficient FIV (in vitro). The APOBEC3H/APOBEC3Z3 haplotype 5 exhibits antiviral activity against vif-proficient FIV, strains Petaluma, C36 and Shizuoka (in vitro). Does not exhibit inhibitory activity against feline leukemia virus (FeLV), feline endogenous retrovirus (RD-114 virus) or a long interspersed nuclear element-1 (LINE-1) retrotransposon (in vitro). The sequence is that of DNA dC-&gt;dU-editing enzyme APOBEC-3H from Felis catus (Cat).